Reading from the N-terminus, the 132-residue chain is Small ribosomal subunit protein uS8 (132 aa).

It belongs to the universal ribosomal protein uS8 family. As to quaternary structure, part of the 30S ribosomal subunit. Contacts proteins S5 and S12.

In terms of biological role, one of the primary rRNA binding proteins, it binds directly to 16S rRNA central domain where it helps coordinate assembly of the platform of the 30S subunit. This Bacillus velezensis (strain DSM 23117 / BGSC 10A6 / LMG 26770 / FZB42) (Bacillus amyloliquefaciens subsp. plantarum) protein is Small ribosomal subunit protein uS8.